Reading from the N-terminus, the 156-residue chain is Small ribosomal subunit protein uS7 (156 aa).

It belongs to the universal ribosomal protein uS7 family. Part of the 30S ribosomal subunit. Contacts proteins S9 and S11.

Functionally, one of the primary rRNA binding proteins, it binds directly to 16S rRNA where it nucleates assembly of the head domain of the 30S subunit. Is located at the subunit interface close to the decoding center, probably blocks exit of the E-site tRNA. This is Small ribosomal subunit protein uS7 from Xanthobacter autotrophicus (strain ATCC BAA-1158 / Py2).